Reading from the N-terminus, the 273-residue chain is Outer surface protein A (273 aa).

The signal sequence occupies residues 1–16 (MKKYLLGIGLILALIA). The N-palmitoyl cysteine moiety is linked to residue Cys-17. Cys-17 carries S-diacylglycerol cysteine lipidation.

This sequence belongs to the OspA lipoprotein family.

The protein localises to the cell outer membrane. It localises to the cell surface. This Borreliella burgdorferi (Lyme disease spirochete) protein is Outer surface protein A.